The following is an 85-amino-acid chain: MSSLDKTMHFDFNQNKGKNVYDTLQDVYNALEEKGYNPINQIVGYLLSGDPAYIPRHNDARNLILKHERDEIIEELVKSYLGKNK.

The protein belongs to the UPF0297 family.

The sequence is that of UPF0297 protein LBA0418 from Lactobacillus acidophilus (strain ATCC 700396 / NCK56 / N2 / NCFM).